The following is a 252-amino-acid chain: Imidazole glycerol phosphate synthase subunit HisF (252 aa).

Active-site residues include D11 and D130.

Belongs to the HisA/HisF family. Heterodimer of HisH and HisF.

The protein localises to the cytoplasm. The catalysed reaction is 5-[(5-phospho-1-deoxy-D-ribulos-1-ylimino)methylamino]-1-(5-phospho-beta-D-ribosyl)imidazole-4-carboxamide + L-glutamine = D-erythro-1-(imidazol-4-yl)glycerol 3-phosphate + 5-amino-1-(5-phospho-beta-D-ribosyl)imidazole-4-carboxamide + L-glutamate + H(+). Its pathway is amino-acid biosynthesis; L-histidine biosynthesis; L-histidine from 5-phospho-alpha-D-ribose 1-diphosphate: step 5/9. In terms of biological role, IGPS catalyzes the conversion of PRFAR and glutamine to IGP, AICAR and glutamate. The HisF subunit catalyzes the cyclization activity that produces IGP and AICAR from PRFAR using the ammonia provided by the HisH subunit. In Staphylococcus aureus (strain Mu3 / ATCC 700698), this protein is Imidazole glycerol phosphate synthase subunit HisF.